Reading from the N-terminus, the 26-residue chain is CLSPGSSCSPTSYNCCRSCNPYSRKC.

3 disulfide bridges follow: Cys-1-Cys-16, Cys-8-Cys-19, and Cys-15-Cys-26. Residues Pro-4, Pro-10, and Pro-21 each carry the 4-hydroxyproline modification.

This sequence belongs to the conotoxin O1 superfamily. In terms of tissue distribution, expressed by the venom duct.

It localises to the secreted. Functionally, omega-conotoxins act at presynaptic membranes, they bind and block voltage-gated calcium channels (Cav). This Conus tulipa (Fish-hunting cone snail) protein is Omega-conotoxin TVIA.